A 107-amino-acid polypeptide reads, in one-letter code: MVIRVFIASSSGFVAIKKKQQDVVRFLEANKIEFEEVDITMSEEQRQWMYKNVPPEKKPTQGNPLPPQIFNGDRYCGDYDSFFESKESNTVFSFLGLKPRLASKAEP.

Positions 61–67 match the SH3-binding motif; sequence QGNPLPP.

It belongs to the SH3BGR family. In terms of tissue distribution, highly expressed in brain, placenta, liver and kidney. Expressed in retina.

The protein resides in the nucleus. This Homo sapiens (Human) protein is SH3 domain-binding glutamic acid-rich-like protein 2 (SH3BGRL2).